Consider the following 140-residue polypeptide: Histone H2B (140 aa).

Residues 1–47 (MPPKAQKTPTTGGKAPAGKAPVEKKEAGKKTAAPSGEKKKRTKTRKE) are disordered. Lysine 7 bears the N6-acetyllysine; alternate mark. Lysine 7 is covalently cross-linked (Glycyl lysine isopeptide (Lys-Gly) (interchain with G-Cter in SUMO); alternate). At lysine 14 the chain carries N6-acetyllysine. Position 24 is an N6-acetyllysine; alternate (lysine 24). A Glycyl lysine isopeptide (Lys-Gly) (interchain with G-Cter in SUMO); alternate cross-link involves residue lysine 24. A Glycyl lysine isopeptide (Lys-Gly) (interchain with G-Cter in SUMO) cross-link involves residue lysine 25. Residue lysine 134 forms a Glycyl lysine isopeptide (Lys-Gly) (interchain with G-Cter in ubiquitin) linkage.

It belongs to the histone H2B family. The nucleosome is a histone octamer containing two molecules each of H2A, H2B, H3 and H4 assembled in one H3-H4 heterotetramer and two H2A-H2B heterodimers. The octamer wraps approximately 147 bp of DNA. Post-translationally, monoubiquitinated by BRE1 to form H2BK123ub1. H2BK123ub1 gives a specific tag for epigenetic transcriptional activation and is also prerequisite for H3K4me and H3K79me formation. H2BK123ub1 also modulates the formation of double-strand breaks during meiosis and is a prerequisite for DNA-damage checkpoint activation. Acetylated by GCN5 to form H2BK11ac and H2BK16ac. H2BK16ac can also be formed by ESA1. Acetylation of N-terminal lysines and particularly formation of H2BK11acK16ac has a positive effect on transcription. In terms of processing, sumoylation to form H2BK6su and probably also H2BK16su or H2BK17su, occurs preferentially near the telomeres and represses gene transcription.

The protein localises to the nucleus. The protein resides in the chromosome. Functionally, core component of nucleosome. Nucleosomes wrap and compact DNA into chromatin, limiting DNA accessibility to the cellular machineries which require DNA as a template. Histones thereby play a central role in transcription regulation, DNA repair, DNA replication and chromosomal stability. DNA accessibility is regulated via a complex set of post-translational modifications of histones, also called histone code, and nucleosome remodeling. The polypeptide is Histone H2B (HTB1) (Phaeosphaeria nodorum (strain SN15 / ATCC MYA-4574 / FGSC 10173) (Glume blotch fungus)).